The following is a 98-amino-acid chain: NADH-ubiquinone oxidoreductase chain 4L (98 aa).

A run of 3 helical transmembrane segments spans residues 1 to 21 (MMPI…GALV), 28 to 48 (STLL…ALLI), and 59 to 79 (APLI…ALLV).

Belongs to the complex I subunit 4L family. In terms of assembly, core subunit of respiratory chain NADH dehydrogenase (Complex I) which is composed of 45 different subunits.

It is found in the mitochondrion inner membrane. The enzyme catalyses a ubiquinone + NADH + 5 H(+)(in) = a ubiquinol + NAD(+) + 4 H(+)(out). Its function is as follows. Core subunit of the mitochondrial membrane respiratory chain NADH dehydrogenase (Complex I) which catalyzes electron transfer from NADH through the respiratory chain, using ubiquinone as an electron acceptor. Part of the enzyme membrane arm which is embedded in the lipid bilayer and involved in proton translocation. The sequence is that of NADH-ubiquinone oxidoreductase chain 4L (MT-ND4L) from Distoechurus pennatus (Feather-tailed possum).